A 134-amino-acid chain; its full sequence is Large-conductance mechanosensitive channel (134 aa).

A run of 2 helical transmembrane segments spans residues V16–L36 and G81–V101.

The protein belongs to the MscL family. Homopentamer.

It localises to the cell inner membrane. Its function is as follows. Channel that opens in response to stretch forces in the membrane lipid bilayer. May participate in the regulation of osmotic pressure changes within the cell. The sequence is that of Large-conductance mechanosensitive channel from Xylella fastidiosa (strain M12).